The sequence spans 740 residues: Zn(2)-C6 fungal-type transcription factor mpsB (740 aa).

The zn(2)-C6 fungal-type DNA-binding region spans 25–46 (RLKCDRNQPCSTCSHRGLSFSC). The disordered stretch occupies residues 625 to 645 (SISTPSHDQDDLDGEAATEAT).

The protein resides in the nucleus. Its function is as follows. Transcription factor; part of the gene cluster that mediates the biosynthesis of macrophasetins, 3-decalinoyltetramic acids (DTAs) which feature a tetramate (pyrrolidine-2,4-dione) unit connected to a decalin fragment and that have potent bioactivities. This chain is Zn(2)-C6 fungal-type transcription factor mpsB, found in Macrophomina phaseolina (strain MS6) (Charcoal rot fungus).